The primary structure comprises 148 residues: Cytochrome c-552 (148 aa).

A signal peptide spans 1–17 (MKRTLMAFLLLGGLALA). At Q18 the chain carries Pyrrolidone carboxylic acid. Heme c-binding residues include C28, C31, H32, and M86.

Post-translationally, binds 1 heme c group covalently per subunit.

This monoheme basic protein appears to function as an electron donor to cytochrome oxidase in T.thermophilus. The sequence is that of Cytochrome c-552 (cycA) from Thermus thermophilus (strain ATCC 27634 / DSM 579 / HB8).